We begin with the raw amino-acid sequence, 281 residues long: MEKFTLVTFYHFVQLENYEDMRDELLSCCIEKGLKGTVLLALEGINGSVAGHDGEIRDFLDFVRRDERLRGLEWKESYTNFQPFQEMKVRLKKEIVALGCAELENMEICETGEYVEPEDWSSLIAREDVKTIDTRNLYETKLGRFKYSIDPETINFRDFQEWVRKWIEKDNVSMEQKIAMYCTGGVRCEKSTAYMKRIGFKNVYQLKGGIINYFLKTKNKDGAWVGDCFVFDDRVAVNVDLEPIQLKCLECSCVVNTDDLKNIPRGRVLCSGCGQNTTRFS.

The Rhodanese domain occupies 125–222 (AREDVKTIDT…YFLKTKNKDG (98 aa)). The active-site Cysteine persulfide intermediate is the Cys-182.

Belongs to the TrhO family.

It carries out the reaction uridine(34) in tRNA + AH2 + O2 = 5-hydroxyuridine(34) in tRNA + A + H2O. Functionally, catalyzes oxygen-dependent 5-hydroxyuridine (ho5U) modification at position 34 in tRNAs. This chain is tRNA uridine(34) hydroxylase, found in Neorickettsia sennetsu (strain ATCC VR-367 / Miyayama) (Ehrlichia sennetsu).